The primary structure comprises 789 residues: Probable phosphoketolase 1 (789 aa).

This sequence belongs to the XFP family. Thiamine diphosphate is required as a cofactor.

The polypeptide is Probable phosphoketolase 1 (Rhizobium meliloti (strain 1021) (Ensifer meliloti)).